The primary structure comprises 163 residues: Ribosome maturation factor RimP (163 aa).

This sequence belongs to the RimP family.

Its subcellular location is the cytoplasm. In terms of biological role, required for maturation of 30S ribosomal subunits. The chain is Ribosome maturation factor RimP from Bordetella petrii (strain ATCC BAA-461 / DSM 12804 / CCUG 43448).